The primary structure comprises 309 residues: Transcriptional regulator HilD (309 aa).

The region spanning 209–306 (ERVYNIISSS…KTTPSTFIKM (98 aa)) is the HTH araC/xylS-type domain. DNA-binding regions (H-T-H motif) lie at residues 226–247 (TDVA…AEEG) and 273–296 (VNAV…KKYF).

The chain is Transcriptional regulator HilD (hilD) from Salmonella typhimurium (strain SL1344).